Consider the following 266-residue polypeptide: Glutamate racemase (266 aa).

Residues 9 to 10 and 41 to 42 contribute to the substrate site; these read DS and YG. The Proton donor/acceptor role is filled by Cys-73. 74 to 75 provides a ligand contact to substrate; sequence NS. Cys-183 (proton donor/acceptor) is an active-site residue. Residue 184–185 coordinates substrate; sequence TH.

The protein belongs to the aspartate/glutamate racemases family.

The enzyme catalyses L-glutamate = D-glutamate. It functions in the pathway cell wall biogenesis; peptidoglycan biosynthesis. Functionally, provides the (R)-glutamate required for cell wall biosynthesis. The sequence is that of Glutamate racemase from Shewanella halifaxensis (strain HAW-EB4).